We begin with the raw amino-acid sequence, 121 residues long: Large ribosomal subunit protein uL18 (121 aa).

Belongs to the universal ribosomal protein uL18 family. As to quaternary structure, part of the 50S ribosomal subunit; part of the 5S rRNA/L5/L18/L25 subcomplex. Contacts the 5S and 23S rRNAs.

In terms of biological role, this is one of the proteins that bind and probably mediate the attachment of the 5S RNA into the large ribosomal subunit, where it forms part of the central protuberance. The sequence is that of Large ribosomal subunit protein uL18 from Spiroplasma kunkelii.